The following is a 156-amino-acid chain: SsrA-binding protein (156 aa).

This sequence belongs to the SmpB family.

Its subcellular location is the cytoplasm. In terms of biological role, required for rescue of stalled ribosomes mediated by trans-translation. Binds to transfer-messenger RNA (tmRNA), required for stable association of tmRNA with ribosomes. tmRNA and SmpB together mimic tRNA shape, replacing the anticodon stem-loop with SmpB. tmRNA is encoded by the ssrA gene; the 2 termini fold to resemble tRNA(Ala) and it encodes a 'tag peptide', a short internal open reading frame. During trans-translation Ala-aminoacylated tmRNA acts like a tRNA, entering the A-site of stalled ribosomes, displacing the stalled mRNA. The ribosome then switches to translate the ORF on the tmRNA; the nascent peptide is terminated with the 'tag peptide' encoded by the tmRNA and targeted for degradation. The ribosome is freed to recommence translation, which seems to be the essential function of trans-translation. This is SsrA-binding protein from Clostridium beijerinckii (strain ATCC 51743 / NCIMB 8052) (Clostridium acetobutylicum).